A 478-amino-acid chain; its full sequence is Adenosylhomocysteinase (478 aa).

Residues threonine 56, aspartate 139, and glutamate 201 each contribute to the substrate site. 202–204 lines the NAD(+) pocket; it reads TTT. Substrate contacts are provided by lysine 231 and aspartate 235. NAD(+)-binding positions include asparagine 236, 265 to 270, glutamate 288, asparagine 323, 344 to 346, and asparagine 392; these read GYGDVG and IGH.

Belongs to the adenosylhomocysteinase family. NAD(+) serves as cofactor.

The protein resides in the cytoplasm. It carries out the reaction S-adenosyl-L-homocysteine + H2O = L-homocysteine + adenosine. It functions in the pathway amino-acid biosynthesis; L-homocysteine biosynthesis; L-homocysteine from S-adenosyl-L-homocysteine: step 1/1. Functionally, may play a key role in the regulation of the intracellular concentration of adenosylhomocysteine. This is Adenosylhomocysteinase from Corynebacterium diphtheriae (strain ATCC 700971 / NCTC 13129 / Biotype gravis).